We begin with the raw amino-acid sequence, 351 residues long: Molybdenum import ATP-binding protein ModC (351 aa).

The 229-residue stretch at 1–229 folds into the ABC transporter domain; that stretch reads MLEINIHQQL…DILADWQSET (229 aa). 31-38 provides a ligand contact to ATP; sequence GRSGAGKS. Positions 290–351 constitute a Mop domain; sequence HSSIRNILNG…IYVQIKSVSL (62 aa).

The protein belongs to the ABC transporter superfamily. Molybdate importer (TC 3.A.1.8) family. As to quaternary structure, the complex is composed of two ATP-binding proteins (ModC), two transmembrane proteins (ModB) and a solute-binding protein (ModA).

The protein resides in the cell inner membrane. It catalyses the reaction molybdate(out) + ATP + H2O = molybdate(in) + ADP + phosphate + H(+). Its function is as follows. Part of the ABC transporter complex ModABC involved in molybdenum import. Responsible for energy coupling to the transport system. The polypeptide is Molybdenum import ATP-binding protein ModC (Haemophilus ducreyi (strain 35000HP / ATCC 700724)).